The primary structure comprises 452 residues: Digeranylgeranylglycerophospholipid reductase (452 aa).

FAD is bound by residues 15 to 16, 35 to 36, and 45 to 50; these read FA, DS, and KPCGDA. An a 2,3-bis-O-phytanyl-sn-glycerol 1-phospholipid-binding site is contributed by histidine 55. Residues alanine 122 and aspartate 288 each coordinate FAD. A 2,3-bis-O-phytanyl-sn-glycerol 1-phospholipid is bound at residue histidine 297. 300 to 301 contributes to the FAD binding site; it reads GK. Residues cysteine 310 and cysteine 335 are joined by a disulfide bond. Tyrosine 340 contributes to the a 2,3-bis-O-phytanyl-sn-glycerol 1-phospholipid binding site.

This sequence belongs to the geranylgeranyl reductase family. As to quaternary structure, monomer. FAD is required as a cofactor.

The enzyme catalyses a 2,3-bis-O-phytanyl-sn-glycerol 1-phospholipid + 8 A = a 2,3-bis-O-(geranylgeranyl)-sn-glycerol 1-phospholipid + 8 AH2. It catalyses the reaction 2,3-bis-O-(phytanyl)-sn-glycerol 1-phosphate + 8 A = 2,3-bis-O-(geranylgeranyl)-sn-glycerol 1-phosphate + 8 AH2. The catalysed reaction is sn-3-O-phytanylglycerol 1-phosphate + 4 A = sn-3-O-(geranylgeranyl)glycerol 1-phosphate + 4 AH2. It carries out the reaction phytyl diphosphate + 3 A = (2E,6E,10E)-geranylgeranyl diphosphate + 3 AH2. It functions in the pathway membrane lipid metabolism; glycerophospholipid metabolism. Its function is as follows. Is involved in the reduction of 2,3-digeranylgeranylglycerophospholipids (unsaturated archaeols) into 2,3-diphytanylglycerophospholipids (saturated archaeols) in the biosynthesis of archaeal membrane lipids. Catalyzes the formation of archaetidic acid (2,3-di-O-phytanyl-sn-glyceryl phosphate) from 2,3-di-O-geranylgeranylglyceryl phosphate (DGGGP) via the hydrogenation of each double bond of the isoprenoid chains. Is not active with NADPH or NADH as an electron donor; the physiological reducing agent is unknown. Is also active on the more upstream precursors of membrane lipid biosynthesis, catalyzing the complete reduction of 3-O-geranylgeranylglyceryl phosphate (GGGP) to 3-O-phytanylglyceryl phosphate, and the partial reduction of geranylgeranyl diphosphate (GGPP) to phytyl diphosphate, thus reducing three of four GGPP double bonds and preserving the allylic double bond (at position 2). This reaction product is a reactive prenyl donor, which can be used as a substrate by archaeal prenyltransferases such as GGGP synthases. The protein is Digeranylgeranylglycerophospholipid reductase of Sulfolobus acidocaldarius (strain ATCC 33909 / DSM 639 / JCM 8929 / NBRC 15157 / NCIMB 11770).